The primary structure comprises 465 residues: MFTRVANFCRKVLSREESEAEQAVARPHMTIIPREQHAISRKDISENALKVLYRLNKAGYEAYLVGGGVRDLLLGKKPKDFDVTTNATPDQVRKLFRNCRLVGRRFRLAHVMFGPEIIEVATFRGHHEGSESDRTTSQRGQNGMLLRDNIFGSIEEDAQRRDFTINSLYYSVADFTVRDYVGGMQDLQEGVIRLIGNPETRYREDPVRMLRAVRFAAKLNMHISPETAEPIPRLATLLNDIPPARLFEESLKLLQAGNGYETYQQLREYHLFQPLFPTITRYFTENGDSAMERIIAQVLKNTDNRIRNEMRVNPAFLFAAMFWYPLLEMAQKIAQESGLAYYDAFALAMNDVLDEACRSLAIPKRLTTLTRDIWQLQLRMSRRQGKRAWKLMEHPKFRAAFDLLELRAQVENNTELQRLAQWWAEFQASAPPEQKGMLNELDDDPAPRRRRSRPRKRAPRREGTV.

Catalysis depends on residues Asp80, Asp82, and Asp162. The segment at 430–465 (APPEQKGMLNELDDDPAPRRRRSRPRKRAPRREGTV) is disordered. Positions 448–459 (RRRRSRPRKRAP) are enriched in basic residues.

Belongs to the tRNA nucleotidyltransferase/poly(A) polymerase family.

It carries out the reaction RNA(n) + ATP = RNA(n)-3'-adenine ribonucleotide + diphosphate. In terms of biological role, adds poly(A) tail to the 3' end of many RNAs, which usually targets these RNAs for decay. Plays a significant role in the global control of gene expression, through influencing the rate of transcript degradation, and in the general RNA quality control. This Salmonella typhimurium (strain LT2 / SGSC1412 / ATCC 700720) protein is Poly(A) polymerase I.